The chain runs to 250 residues: MKYIDEIQILGKCSEGMSPAEVYKCQLKNTVCYLKKIDDIFSKTTYSVKREAEMMMWLSDKLKVPDVIEYGVREHSEYLIMSELRGKHIDCFIDHPIKYIECLVNALHQLQAIDIRNCPFSSKIDVRLKELKYLLDNRIADIDVSNWEDTTEFDDPMTLYQWLCENQPQEELCLSHGDMSANFFVSHDGIYFYDLARCGVADKWLDIAFCVREIREYYPDSDYEKFFFNMLGLEPDYKKINYYILLDEMF.

The active-site Proton acceptor is the D178.

It belongs to the aminoglycoside phosphotransferase family.

The enzyme catalyses kanamycin A + ATP = kanamycin 3'-phosphate + ADP + H(+). Resistance to kanamycin and structurally-related aminoglycosides, including amikacin. The polypeptide is Aminoglycoside 3'-phosphotransferase (aphA-7) (Campylobacter jejuni).